The chain runs to 132 residues: Sodium/calcium exchanger regulatory protein 1 (132 aa).

Residues Arg-126 and Tyr-128 each contribute to the (9Z)-hexadecenoate site.

This sequence belongs to the calycin superfamily. Fatty-acid binding protein (FABP) family. Interacts with Na(+)/Ca(2+) exchanger NCXSQ1; ReP1-NCXSQ phosphorylation does not affect the interaction. Phosphorylated. Phosphorylation may result in the release of the bound fatty acid. In terms of tissue distribution, expressed in the optic nerve (at protein level).

Its subcellular location is the cytoplasm. It is found in the membrane. Functionally, binds and may transport fatty acids such as palmitoleate. Also binds poly-phosphoinositides including phosphatidylinositol 4-phosphate (PtdIns(4)P), phosphatidylinositol 4,5-bisphosphate (PtdIns(4,5)P2) and phosphatidylinositol 3,4,5-trisphosphate (PtdIns(3,4,5)P3), and phosphatidic acid. When phosphorylated, stimulates the activity of optic nerve Na(+)/Ca(2+) exchanger. The chain is Sodium/calcium exchanger regulatory protein 1 from Doryteuthis pealeii (Longfin inshore squid).